The primary structure comprises 360 residues: Nucleoporin SEH1-A (360 aa).

6 WD repeats span residues 10-49, 55-96, 111-152, 160-210, 217-258, and 276-315; these read DHKD…NWHC, THSG…SNDK, DSRT…NLSQ, SCKL…RKYA, SVSD…KELS, and NHNS…NWKC.

It belongs to the WD repeat SEC13 family. As to quaternary structure, component of the Nup107-160 subcomplex of the nuclear pore complex (NPC). The Nup107-160 subcomplex includes NUP160, NUP133, NUP107, NUP98, NUP85, NUP43, NUP37, SEH1 and SEC13. Component of the GATOR2 subcomplex, composed of MIOS, SEC13, SEH1L, WDR24 and WDR59. The GATOR2 complex interacts with CASTOR1 and CASTOR2; the interaction is negatively regulated by arginine. The GATOR2 complex interacts with SESN1, SESN2 and SESN3; the interaction is negatively regulated by amino acids.

It is found in the chromosome. The protein localises to the centromere. It localises to the kinetochore. Its subcellular location is the nucleus. The protein resides in the nuclear pore complex. It is found in the lysosome membrane. Its activity is regulated as follows. The GATOR2 complex is negatively regulated by the upstream amino acid sensors CASTOR1 and SESN2, which sequester the GATOR2 complex in absence of amino acids. In the presence of abundant amino acids, GATOR2 is released from CASTOR1 and SESN2 and activated. In terms of biological role, component of the Nup107-160 subcomplex of the nuclear pore complex (NPC). The Nup107-160 subcomplex is required for the assembly of a functional NPC. The Nup107-160 subcomplex is also required for normal kinetochore microtubule attachment, mitotic progression and chromosome segregation. This subunit plays a role in recruitment of the Nup107-160 subcomplex to the kinetochore. As a component of the GATOR2 complex, functions as an activator of the amino acid-sensing branch of the mTORC1 signaling pathway. The GATOR2 complex indirectly activates mTORC1 through the inhibition of the GATOR1 subcomplex. GATOR2 probably acts as an E3 ubiquitin-protein ligase toward GATOR1. In the presence of abundant amino acids, the GATOR2 complex mediates ubiquitination of the NPRL2 core component of the GATOR1 complex, leading to GATOR1 inactivation. In the absence of amino acids, GATOR2 is inhibited, activating the GATOR1 complex. The polypeptide is Nucleoporin SEH1-A (seh1l-a) (Xenopus laevis (African clawed frog)).